The sequence spans 592 residues: Monocopper oxidase-like protein SKS2 (592 aa).

An N-terminal signal peptide occupies residues 1–23 (MAATDFFFAFVFSFALIFGFSFA). Asn-61, Asn-110, Asn-172, Asn-203, Asn-259, Asn-280, Asn-295, Asn-344, Asn-364, Asn-433, and Asn-447 each carry an N-linked (GlcNAc...) asparagine glycan. His-455 contributes to the Cu cation binding site. N-linked (GlcNAc...) asparagine glycans are attached at residues Asn-476 and Asn-536. Ser-564 carries the GPI-anchor amidated serine lipid modification. Residues 565–592 (ATKSMTNGQLILIFSMMMVLLSSFSSFC) constitute a propeptide, removed in mature form.

It belongs to the multicopper oxidase family. Requires Cu cation as cofactor.

Its subcellular location is the cell membrane. This is Monocopper oxidase-like protein SKS2 (SKS2) from Arabidopsis thaliana (Mouse-ear cress).